The following is a 291-amino-acid chain: Tumor necrosis factor ligand superfamily member 10 (291 aa).

At 1–17 (MPSSGALKDLSFSQHFR) the chain is on the cytoplasmic side. The helical; Signal-anchor for type II membrane protein transmembrane segment at 18–38 (MMVICIVLLQVLLQAVSVAVT) threads the bilayer. Over 39–291 (YMYFTNEMKQ…ASFFGAFLIN (253 aa)) the chain is Extracellular. Asparagine 52 is a glycosylation site (N-linked (GlcNAc...) asparagine). The 165-residue stretch at 126–290 (VAAHITGITR…EASFFGAFLI (165 aa)) folds into the THD domain. A Zn(2+)-binding site is contributed by cysteine 240.

It belongs to the tumor necrosis factor family. In terms of assembly, homotrimer. One TNFSF10 homotrimer interacts with three TNFSF10A mononers. One TNFSF10 homotrimer interacts with three TNFSF10B mononers. Tyrosine phosphorylated by PKDCC/VLK. Widespread.

It localises to the cell membrane. The protein resides in the secreted. In terms of biological role, cytokine that binds to TNFRSF10A/TRAILR1, TNFRSF10B/TRAILR2, TNFRSF10C/TRAILR3, TNFRSF10D/TRAILR4 and possibly also to TNFRSF11B/OPG. Induces apoptosis. Its activity may be modulated by binding to the decoy receptors TNFRSF10C/TRAILR3, TNFRSF10D/TRAILR4 and TNFRSF11B/OPG that cannot induce apoptosis. The protein is Tumor necrosis factor ligand superfamily member 10 (Tnfsf10) of Mus musculus (Mouse).